Here is a 367-residue protein sequence, read N- to C-terminus: Dual specificity protein phosphatase 1 (367 aa).

The 118-residue stretch at Gly20 to Ser137 folds into the Rhodanese domain. The Tyrosine-protein phosphatase domain maps to Gly173–Ala314. Cys258 (phosphocysteine intermediate) is an active-site residue. A phosphoserine; by MAPK1 and MAPK3 mark is found at Ser359 and Ser364.

Belongs to the protein-tyrosine phosphatase family. Non-receptor class dual specificity subfamily. Post-translationally, phosphorylation at Ser-359 and Ser-364 by MAPK1/ERK2 and MAPK3/ERK1 reduces its rate of degradation. In terms of processing, 'Lys-48'-linked polyubiquitinated by NEURL3, leading to proteasomal degradation.

It localises to the nucleus. It carries out the reaction O-phospho-L-tyrosyl-[protein] + H2O = L-tyrosyl-[protein] + phosphate. The catalysed reaction is O-phospho-L-seryl-[protein] + H2O = L-seryl-[protein] + phosphate. The enzyme catalyses O-phospho-L-threonyl-[protein] + H2O = L-threonyl-[protein] + phosphate. Dual specificity phosphatase that dephosphorylates MAP kinase MAPK1/ERK2 on both 'Thr-183' and 'Tyr-185', regulating its activity during the meiotic cell cycle. The protein is Dual specificity protein phosphatase 1 of Mus musculus (Mouse).